The primary structure comprises 143 residues: MLMLRSPFSDSNVLDHFLDEITGSVQFPYWRNADHNSFNFSDNIGEIVNDESKFSVQLDVSHFKPEDLKIELDGRELKIEGIQEKKSEHGYSKRSFSKMILLPEDVDLTSVKSAISNEGKLQIEAPKKTNSSRSIPINFVAKH.

The region spanning 35 to 140 (HNSFNFSDNI…SSRSIPINFV (106 aa)) is the sHSP domain.

The protein belongs to the small heat shock protein (HSP20) family.

The polypeptide is Heat shock protein Hsp-16.48/Hsp-16.49 (hsp-16.48) (Caenorhabditis elegans).